The primary structure comprises 157 residues: Small ribosomal subunit protein uS7 (157 aa).

The protein belongs to the universal ribosomal protein uS7 family. As to quaternary structure, part of the 30S ribosomal subunit. Contacts proteins S9 and S11.

One of the primary rRNA binding proteins, it binds directly to 16S rRNA where it nucleates assembly of the head domain of the 30S subunit. Is located at the subunit interface close to the decoding center, probably blocks exit of the E-site tRNA. The protein is Small ribosomal subunit protein uS7 of Koribacter versatilis (strain Ellin345).